A 145-amino-acid polypeptide reads, in one-letter code: Arginine repressor (145 aa).

It belongs to the ArgR family.

The protein localises to the cytoplasm. It participates in amino-acid biosynthesis; L-arginine biosynthesis [regulation]. In terms of biological role, regulates arginine biosynthesis genes. This Streptococcus mutans serotype c (strain ATCC 700610 / UA159) protein is Arginine repressor.